Reading from the N-terminus, the 115-residue chain is Putative TGFB1-induced anti-apoptotic factor 1 (115 aa).

Not detectable in normal kidney and liver. Up-regulated in chronic and acute allograft rejection: expressed in the inflammatory infiltrate and in tubular epithelial cells.

It is found in the nucleus. Functionally, inhibits the cytotoxic effects of TNF-alpha and overexpressed TNF receptor adapters TRADD, FADD, and RIPK1. Involved in TGF-beta1 inhibition of IkappaB-alpha expression and suppression of TNF-mediated IkappaB-alpha degradation. In Homo sapiens (Human), this protein is Putative TGFB1-induced anti-apoptotic factor 1 (MYO18A).